A 1178-amino-acid polypeptide reads, in one-letter code: DNA-directed RNA polymerase subunit beta' (1178 aa).

Zn(2+) is bound by residues Cys-60, Cys-62, Cys-75, and Cys-78. Mg(2+) is bound by residues Asp-450, Asp-452, and Asp-454. Positions 795, 869, 876, and 879 each coordinate Zn(2+).

It belongs to the RNA polymerase beta' chain family. In terms of assembly, the RNAP catalytic core consists of 2 alpha, 1 beta, 1 beta' and 1 omega subunit. When a sigma factor is associated with the core the holoenzyme is formed, which can initiate transcription. The cofactor is Mg(2+). Requires Zn(2+) as cofactor.

The enzyme catalyses RNA(n) + a ribonucleoside 5'-triphosphate = RNA(n+1) + diphosphate. In terms of biological role, DNA-dependent RNA polymerase catalyzes the transcription of DNA into RNA using the four ribonucleoside triphosphates as substrates. The polypeptide is DNA-directed RNA polymerase subunit beta' (Clostridium botulinum (strain Okra / Type B1)).